A 298-amino-acid chain; its full sequence is 4-hydroxybenzoate octaprenyltransferase (298 aa).

The next 7 helical transmembrane spans lie at 30–50 (IGTWLLMWPTLWALWLAAEGI), 54–74 (GTLLIFVIGVYVMRAAGCVVN), 105–125 (VLFAGLVIIAFGLVCLTNLPT), 148–168 (FPQVVLGAAFSWGIPMAFMAI), 218–238 (DRLMIGLLQALTLLLLAWVGL), 240–260 (LALGGFFWLGLAAMGAIFVFQ), and 275–295 (AFLNNHWAGLVVFAGIALSLW).

The protein belongs to the UbiA prenyltransferase family. Mg(2+) is required as a cofactor.

The protein localises to the cell inner membrane. The enzyme catalyses all-trans-octaprenyl diphosphate + 4-hydroxybenzoate = 4-hydroxy-3-(all-trans-octaprenyl)benzoate + diphosphate. The protein operates within cofactor biosynthesis; ubiquinone biosynthesis. Its function is as follows. Catalyzes the prenylation of para-hydroxybenzoate (PHB) with an all-trans polyprenyl group. Mediates the second step in the final reaction sequence of ubiquinone-8 (UQ-8) biosynthesis, which is the condensation of the polyisoprenoid side chain with PHB, generating the first membrane-bound Q intermediate 3-octaprenyl-4-hydroxybenzoate. The protein is 4-hydroxybenzoate octaprenyltransferase of Chromohalobacter salexigens (strain ATCC BAA-138 / DSM 3043 / CIP 106854 / NCIMB 13768 / 1H11).